We begin with the raw amino-acid sequence, 342 residues long: Protein RecA 1 (342 aa).

Residue 68–75 (GNESSGKT) coordinates ATP.

The protein belongs to the RecA family.

The protein resides in the cytoplasm. Can catalyze the hydrolysis of ATP in the presence of single-stranded DNA, the ATP-dependent uptake of single-stranded DNA by duplex DNA, and the ATP-dependent hybridization of homologous single-stranded DNAs. It interacts with LexA causing its activation and leading to its autocatalytic cleavage. This Myxococcus xanthus protein is Protein RecA 1.